A 421-amino-acid chain; its full sequence is Diaminopimelate decarboxylase (421 aa).

Lys63 carries the post-translational modification N6-(pyridoxal phosphate)lysine. Pyridoxal 5'-phosphate is bound by residues Gly242 and 278 to 281 (EPGR). Positions 281, 317, and 321 each coordinate substrate. Catalysis depends on Cys346, which acts as the Proton donor. Residues Glu347 and Tyr375 each coordinate substrate. Tyr375 provides a ligand contact to pyridoxal 5'-phosphate.

This sequence belongs to the Orn/Lys/Arg decarboxylase class-II family. LysA subfamily. In terms of assembly, homodimer. The cofactor is pyridoxal 5'-phosphate.

It carries out the reaction meso-2,6-diaminopimelate + H(+) = L-lysine + CO2. The protein operates within amino-acid biosynthesis; L-lysine biosynthesis via DAP pathway; L-lysine from DL-2,6-diaminopimelate: step 1/1. Its function is as follows. Specifically catalyzes the decarboxylation of meso-diaminopimelate (meso-DAP) to L-lysine. The sequence is that of Diaminopimelate decarboxylase from Zymomonas mobilis subsp. mobilis (strain ATCC 31821 / ZM4 / CP4).